The following is a 653-amino-acid chain: Protein CBFA2T3 (653 aa).

The segment covering 1 to 10 (MPASRLRDRA) has biased composition (basic and acidic residues). The interval 1-109 (MPASRLRDRA…HTHREDGPAT (109 aa)) is disordered. The tract at residues 1 to 127 (MPASRLRDRA…CLKWSMVCLL (127 aa)) is required for nucleolar targeting (in isoform 1). Positions 1–430 (MPASRLRDRA…RRCQEADREE (430 aa)) are mediates interaction with PDE7A (in isoform 2). The segment at 1–435 (MPASRLRDRA…ADREELNHWA (435 aa)) is mediates localization to the nucleus. Residues 11–23 (ASSASGSTCGSMS) are compositionally biased toward low complexity. Residues 75–86 (STPPSMPPPPPA) show a composition bias toward pro residues. Positions 145–242 (PNGFSNGPAT…IPFLKANLPL (98 aa)) are interaction with ZBTB33. The 96-residue stretch at 171–266 (ARQLSKLKRF…TPAQYLAQHE (96 aa)) folds into the TAFH domain. Residues 176-268 (KLKRFLTTLQ…AQYLAQHEQL (93 aa)) form an interaction with HIF1A region. Residues 284-342 (LLEVNENGKRRTPDRTKENGSDRDPLHPEHLSKRPCTLNPAQRYSPSNGPPQPTPPPHY) form a disordered region. The segment covering 289–315 (ENGKRRTPDRTKENGSDRDPLHPEHLS) has biased composition (basic and acidic residues). The span at 331 to 341 (NGPPQPTPPPH) shows a compositional bias: pro residues. Positions 394 to 412 (EEWKHLNNLLNCIMDMVEK) are nervy homology region 2 (NHR2); essential for down-regulation of PFKFB3, PFKFB4 and PDK1 expression. The segment covering 434–446 (WARRYSDAEDTKK) has biased composition (basic and acidic residues). A disordered region spans residues 434 to 472 (WARRYSDAEDTKKGPAPAAARPRSSSAGPEGPQLDVPRE). Over residues 447-462 (GPAPAAARPRSSSAGP) the composition is skewed to low complexity. 2 positions are modified to phosphoserine: serine 457 and serine 459. A Phosphothreonine modification is found at threonine 479. Residues 485-506 (DIWRKAEEAVNEVKRQAMSELQ) are mediates interaction with PRKAR2A. Residues 485-533 (DIWRKAEEAVNEVKRQAMSELQKAVSDAERKAHELITTERAKMERALAE) are nervy homology region 3 (NHR3); essential for down-regulation of PFKFB3, PFKFB4 and PDK1 expression. Residues 488 to 543 (RKAEEAVNEVKRQAMSELQKAVSDAERKAHELITTERAKMERALAEAKRQASEDAL) are a coiled coil. 8 residues coordinate Zn(2+): cysteine 556, cysteine 559, cysteine 567, cysteine 570, cysteine 576, cysteine 580, histidine 588, and cysteine 592. The MYND-type zinc finger occupies 556–592 (CWNCGRKASETCSGCNAARYCGSFCQHRDWEKHHHVC). Residues 603-653 (VADPVPGPPEAAHSLGPSLPVGAASPSEAGSAGPSRPGSPSPPGPLDTVPR) form a disordered region. The segment covering 622 to 638 (PVGAASPSEAGSAGPSR) has biased composition (low complexity). Phosphoserine is present on residues serine 637 and serine 641. Threonine 650 bears the Phosphothreonine mark.

It belongs to the CBFA2T family. As to quaternary structure, homooligomer. Homotetramerization is mediated by nervy homology region 2 (NRH2). Can interact with RUNX1T1 and CBFA2T2; heterotetramerization between members of the CBFA2T family is proposed. Component of a TAL-1 complex composed at least of CBFA2T3, LDB1, TAL1 and TCF3. Interacts with ERBB4, HDAC1, HDAC2, HDAC3, HDAC6, HDAC8, NCOR1, NCOR2, and ZNF652. According to PubMed:12242670, may not interact with HDAC6. Interacts with PLXNA1, PLXNA3 and PRKAR1A. Isoform 2 interacts with PRKAR2A, PDE7A and probably PDE4A. Interacts with ZBTB4, ZBTB38 and ZBTB33. Interacts with HIF1A and EGLN1. Interacts with the AML1-MTG8/ETO fusion protein. In terms of tissue distribution, widely expressed with higher expression in heart, pancreas, skeletal muscle, spleen, thymus and peripheral blood leukocytes. Expressed in hematopoietic cells (at protein level).

Its subcellular location is the nucleus. It is found in the nucleolus. The protein localises to the nucleoplasm. The protein resides in the golgi apparatus membrane. Its function is as follows. Transcriptional corepressor which facilitates transcriptional repression via its association with DNA-binding transcription factors and recruitment of other corepressors and histone-modifying enzymes. Can repress the expression of MMP7 in a ZBTB33-dependent manner. Reduces the protein levels and stability of the transcriptinal regulator HIF1A; interacts with EGLN1 and promotes the HIF1A prolyl hydroxylation-dependent ubiquitination and proteasomal degradation pathway. Contributes to inhibition of glycolysis and stimulation of mitochondrial respiration by down-regulating the expression of glycolytic genes including PFKFB3, PFKFB4, PDK1, PFKP, LDHA and HK1 which are direct targets of HIF1A. Regulates the proliferation and the differentiation of erythroid progenitors by repressing the expression of TAL1 target genes. Plays a role in granulocyte differentiation. Isoform 2 functions as an A-kinase-anchoring protein. This is Protein CBFA2T3 (CBFA2T3) from Homo sapiens (Human).